The sequence spans 130 residues: Small ribosomal subunit protein uS9 (130 aa).

The protein belongs to the universal ribosomal protein uS9 family.

The sequence is that of Small ribosomal subunit protein uS9 (rpsI) from Haemophilus influenzae (strain ATCC 51907 / DSM 11121 / KW20 / Rd).